A 305-amino-acid chain; its full sequence is Mat- sexual cell fertilization-promoting factor (305 aa).

The segment at residues 38–93 (PAKKKVNGFMGYRSYYSSMFSQLPQKERSPILTTLWQQDPFHKEWDFMCAVYSAIR) is a DNA-binding region (alpha box).

Belongs to the MATALPHA1 family.

It is found in the nucleus. Functionally, controls fertilization, probably by determining the mating type. May be involved in the post-fertilization steps of the sexual cycle besides mat+. It is required for the developmental events that occur in the female organ after fertilization. The chain is Mat- sexual cell fertilization-promoting factor (FMR1) from Podospora anserina (Pleurage anserina).